Reading from the N-terminus, the 259-residue chain is Ribosome maturation factor RimP (259 aa).

Residues 198-259 (SLGLAPEPPP…RGEIDTSEGD (62 aa)) form a disordered region. The segment covering 243–253 (LAADKARRGEI) has biased composition (basic and acidic residues).

It belongs to the RimP family.

Its subcellular location is the cytoplasm. Its function is as follows. Required for maturation of 30S ribosomal subunits. This is Ribosome maturation factor RimP from Rhodopseudomonas palustris (strain TIE-1).